Here is a 589-residue protein sequence, read N- to C-terminus: F-box only protein 24 (589 aa).

The region spanning 23-69 is the F-box domain; it reads PISVQLFPPELVEHIVSFLPVKDLVALGQTCHYFHEVCDAEGVWRRI. Residues 386–435 form an RCC1 repeat; it reads GRIFMQGNNRYGQLGTGDKMDRGEPTQVHYLQRPIALWCGLNHSLVLSQT. The segment at 506–526 is disordered; the sequence is VGGSPEPSQGAGAPQDPGGTA.

In terms of assembly, directly interacts with SKP1 and CUL1.

Its function is as follows. Substrate-recognition component of the SCF (SKP1-CUL1-F-box protein)-type E3 ubiquitin ligase complex. This chain is F-box only protein 24 (Fbxo24), found in Mus musculus (Mouse).